The following is a 411-amino-acid chain: Thyroid hormone receptor beta (411 aa).

Residues 1–24 (MTPNSMTENGLPAWDKPKPCPDGE) are disordered. The tract at residues 1-104 (MTPNSMTENG…IPSYLDKDEL (104 aa)) is modulating. A compositionally biased stretch (basic and acidic residues) spans 15-24 (DKPKPCPDGE). 8 residues coordinate Zn(2+): cysteine 105, cysteine 108, cysteine 122, cysteine 125, cysteine 143, cysteine 149, cysteine 159, and cysteine 162. 2 consecutive NR C4-type zinc fingers follow at residues 105–125 (CVVCGDKATGYHYRCITCEGC) and 143–167 (CKYEGKCVIDKVTRNQCQECRFKKC). The segment at residues 105–179 (CVVCGDKATG…VGMATDLVLD (75 aa)) is a DNA-binding region (nuclear receptor). In terms of domain architecture, NR LBD spans 215–411 (QEWELIKTVT…EHYINYRRNS (197 aa)). The segment at 242–411 (KFLPEDIGQA…EHYINYRRNS (170 aa)) is interaction with NR2F6. Arginine 280 and asparagine 329 together coordinate 3,3',5-triiodo-L-thyronine. Arginine 280 and asparagine 329 together coordinate L-thyroxine.

This sequence belongs to the nuclear hormone receptor family. NR1 subfamily. As to quaternary structure, binds DNA as a dimer; homodimer and heterodimer with RXRA. Interacts with the coactivators NCOA1/SRC1, NCOA2/GRIP1, NCOA7 and MED1/TRAP220 in a ligand-inducible manner. Interacts with the corepressor NCOR1 in absence of ligand. Interacts with C1D. Interacts with NR2F6; the interaction impairs the binding of the THRB homodimer and THRB:RXRB heterodimer to T3 response elements. Interacts with PRMT2 and THRSP. Interacts with TACC1; this interaction is decreased in the presence of thyroid hormone T3.

It is found in the nucleus. Functionally, nuclear hormone receptor that can act as a repressor or activator of transcription. High affinity receptor for thyroid hormones, including triiodothyronine and thyroxine. The sequence is that of Thyroid hormone receptor beta (THRB) from Ovis aries (Sheep).